Consider the following 241-residue polypeptide: uncharacterized protein (241 aa).

The protein localises to the cytoplasm. It is found in the nucleus. This is an uncharacterized protein from Schizosaccharomyces pombe (strain 972 / ATCC 24843) (Fission yeast).